A 155-amino-acid polypeptide reads, in one-letter code: Cell division protein SepF (155 aa).

The segment covering 16-35 (TEDEEEDVETVEESEDVEEE) has biased composition (acidic residues). The segment at 16 to 44 (TEDEEEDVETVEESEDVEEEESKKPQFIQ) is disordered.

It belongs to the SepF family. In terms of assembly, homodimer. Interacts with FtsZ.

It localises to the cytoplasm. Functionally, cell division protein that is part of the divisome complex and is recruited early to the Z-ring. Probably stimulates Z-ring formation, perhaps through the cross-linking of FtsZ protofilaments. Its function overlaps with FtsA. The polypeptide is Cell division protein SepF (Acetivibrio thermocellus (strain ATCC 27405 / DSM 1237 / JCM 9322 / NBRC 103400 / NCIMB 10682 / NRRL B-4536 / VPI 7372) (Clostridium thermocellum)).